Consider the following 255-residue polypeptide: Protein C activator (255 aa).

Positions 1-18 (MVLIRVLANLLILHLSYA) are cleaved as a signal peptide. Positions 19–24 (QKSSEL) are excised as a propeptide. Residues 25-246 (VIGGDECNIN…YTDWIQSIIS (222 aa)) enclose the Peptidase S1 domain. Cystine bridges form between C31-C162, C49-C65, C97-C253, C141-C207, C173-C186, and C197-C222. N45 carries N-linked (GlcNAc...) asparagine glycosylation. H64 acts as the Charge relay system in catalysis. A glycan (N-linked (GlcNAc...) asparagine) is linked at N102. D109 acts as the Charge relay system in catalysis. N-linked (GlcNAc...) asparagine glycosylation is present at N153. S201 serves as the catalytic Charge relay system.

This sequence belongs to the peptidase S1 family. Snake venom subfamily. Monomer. In terms of tissue distribution, expressed by the venom gland.

The protein resides in the secreted. In terms of biological role, snake venom serine protease that selectively cleaves the heavy chain of protein C (PROC). This activation is thrombomodulin-independent. This is Protein C activator from Agkistrodon piscivorus leucostoma (Western cottonmouth).